Reading from the N-terminus, the 116-residue chain is Large ribosomal subunit protein bL19 (116 aa).

It belongs to the bacterial ribosomal protein bL19 family.

This protein is located at the 30S-50S ribosomal subunit interface and may play a role in the structure and function of the aminoacyl-tRNA binding site. This chain is Large ribosomal subunit protein bL19, found in Actinobacillus pleuropneumoniae serotype 5b (strain L20).